A 186-amino-acid chain; its full sequence is Methyl-CpG-binding domain protein 3-like 1 (186 aa).

The transcription repressor stretch occupies residues 1 to 104; the sequence is MGKTSQRKQC…TSTDTVASAS (104 aa).

The protein belongs to the MBD3L family. Highly expressed in testis. Not detected in the other tissues tested.

The protein localises to the nucleus. Transcriptional repressor. The sequence is that of Methyl-CpG-binding domain protein 3-like 1 (Mbd3l1) from Mus musculus (Mouse).